The chain runs to 1748 residues: Flagellar attachment zone protein 1 (1748 aa).

Coiled-coil stretches lie at residues 613 to 657 (REQE…KLQK), 684 to 864 (VTLD…HKVR), and 903 to 1663 (NDHM…SALE). 41 tandem repeats follow at residues 1012 to 1025 (EELELKAAENEKLA), 1026 to 1039 (EELELKAAENEKLA), 1040 to 1053 (EELELKAAENEKLA), 1054 to 1067 (EALDLKAAENEKLA), 1068 to 1081 (EELELKVAENEKLA), 1082 to 1095 (EELELKVAENEKLA), 1096 to 1109 (EELELKAAENEKLA), 1110 to 1123 (EELELKAAENEKLA), 1124 to 1137 (EELELKAAENEKLA), 1138 to 1151 (EELELKAAENEKLA), 1152 to 1165 (EALDLKAAENEKLA), 1166 to 1179 (EELDLKAAENEKLA), 1180 to 1193 (EELELKVAENEKLA), 1194 to 1207 (EELELKAAENEKLA), 1208 to 1221 (EELELKAAENEKLA), 1222 to 1235 (EELELKAAENEKLA), 1236 to 1249 (EELELKVAENEKLA), 1250 to 1263 (EELELKAAENEKLA), 1264 to 1277 (EELELKAAENEKLA), 1278 to 1291 (EELELKAAENEKLA), 1292 to 1305 (EELELKVAENEKLA), 1306 to 1319 (EELELKAAENEKLA), 1320 to 1333 (EELELKAAENEKLA), 1334 to 1347 (EELELKAAENEKLA), 1348 to 1361 (EELELKAAENEKLA), 1362 to 1375 (EELELKAAENEKLA), 1376 to 1389 (EELELKAAENEKLA), 1390 to 1403 (EELELKAAENEKLA), 1404 to 1417 (EELELKAAENEKLA), 1418 to 1431 (EELELKAAENEKLA), 1432 to 1445 (EELELKAAENEKLA), 1446 to 1459 (EELELKAAENEKLA), 1460 to 1473 (EELELKAAENEKLA), 1474 to 1487 (EELELKAAENEKLA), 1488 to 1501 (EELELKAAENEKLA), 1502 to 1515 (EELELKAAENEKLA), 1516 to 1529 (EELELKAAENEKLA), 1530 to 1543 (EELELKAAENEKLA), 1544 to 1557 (EELELKVAENEKLA), 1558 to 1571 (EELELKVAENEKLA), and 1572 to 1585 (EELELKVAENKRLA). The segment at 1012–1529 (EELELKAAEN…LKAAENEKLA (518 aa)) is 41 X 14 AA tandem repeats of E-E-L-E-L-K-[VA]-A-E-N-E-K-L-A.

Its subcellular location is the cell projection. It is found in the cilium. It localises to the flagellum. Its function is as follows. A component of FAZ filament that is required for correct FAZ assembly and attachment. Not essential for new flagellum growth. This is Flagellar attachment zone protein 1 from Trypanosoma brucei gambiense (strain MHOM/CI/86/DAL972).